Consider the following 342-residue polypeptide: Isopentenyl-diphosphate delta-isomerase (342 aa).

12–13 (RK) contacts substrate. FMN-binding positions include 71–73 (AMT), S101, and N129. 101 to 103 (SQR) lines the substrate pocket. Substrate is bound at residue Q163. Position 164 (E164) interacts with Mg(2+). FMN is bound by residues K195, T225, 272 to 274 (GIR), and 293 to 294 (AR).

It belongs to the IPP isomerase type 2 family. As to quaternary structure, homooctamer. Dimer of tetramers. The cofactor is FMN. NADPH is required as a cofactor. Mg(2+) serves as cofactor.

The protein resides in the cytoplasm. The catalysed reaction is isopentenyl diphosphate = dimethylallyl diphosphate. Involved in the biosynthesis of isoprenoids. Catalyzes the 1,3-allylic rearrangement of the homoallylic substrate isopentenyl (IPP) to its allylic isomer, dimethylallyl diphosphate (DMAPP). In Mycolicibacterium vanbaalenii (strain DSM 7251 / JCM 13017 / BCRC 16820 / KCTC 9966 / NRRL B-24157 / PYR-1) (Mycobacterium vanbaalenii), this protein is Isopentenyl-diphosphate delta-isomerase.